A 344-amino-acid chain; its full sequence is tRNA N6-adenosine threonylcarbamoyltransferase (344 aa).

Residues His110 and His114 each coordinate Fe cation. Substrate-binding positions include 133-137 (VVSGA), Asp166, Gly179, and Asn278. Asp303 provides a ligand contact to Fe cation.

Belongs to the KAE1 / TsaD family. Requires Fe(2+) as cofactor.

It is found in the cytoplasm. The catalysed reaction is L-threonylcarbamoyladenylate + adenosine(37) in tRNA = N(6)-L-threonylcarbamoyladenosine(37) in tRNA + AMP + H(+). In terms of biological role, required for the formation of a threonylcarbamoyl group on adenosine at position 37 (t(6)A37) in tRNAs that read codons beginning with adenine. Is involved in the transfer of the threonylcarbamoyl moiety of threonylcarbamoyl-AMP (TC-AMP) to the N6 group of A37, together with TsaE and TsaB. TsaD likely plays a direct catalytic role in this reaction. The sequence is that of tRNA N6-adenosine threonylcarbamoyltransferase from Chlamydia pneumoniae (Chlamydophila pneumoniae).